A 115-amino-acid polypeptide reads, in one-letter code: U3-lycotoxin-Ls1a (115 aa).

An N-terminal signal peptide occupies residues 1–20 (MKFVLLFGVLLVTLFSYSSA). Residues 21–44 (EMLDDFDQADEDELLSLIEKEEAR) constitute a propeptide that is removed on maturation. 4 disulfide bridges follow: Cys-48/Cys-63, Cys-55/Cys-72, Cys-62/Cys-87, and Cys-74/Cys-85.

It belongs to the neurotoxin 19 (CSTX) family. 01 subfamily. As to expression, expressed by the venom gland.

The protein localises to the secreted. This is U3-lycotoxin-Ls1a from Lycosa singoriensis (Wolf spider).